A 145-amino-acid polypeptide reads, in one-letter code: D-aminoacyl-tRNA deacylase (145 aa).

Positions 137–138 (GP) match the Gly-cisPro motif, important for rejection of L-amino acids motif.

It belongs to the DTD family. Homodimer.

The protein localises to the cytoplasm. It carries out the reaction glycyl-tRNA(Ala) + H2O = tRNA(Ala) + glycine + H(+). The catalysed reaction is a D-aminoacyl-tRNA + H2O = a tRNA + a D-alpha-amino acid + H(+). Functionally, an aminoacyl-tRNA editing enzyme that deacylates mischarged D-aminoacyl-tRNAs. Also deacylates mischarged glycyl-tRNA(Ala), protecting cells against glycine mischarging by AlaRS. Acts via tRNA-based rather than protein-based catalysis; rejects L-amino acids rather than detecting D-amino acids in the active site. By recycling D-aminoacyl-tRNA to D-amino acids and free tRNA molecules, this enzyme counteracts the toxicity associated with the formation of D-aminoacyl-tRNA entities in vivo and helps enforce protein L-homochirality. This Idiomarina loihiensis (strain ATCC BAA-735 / DSM 15497 / L2-TR) protein is D-aminoacyl-tRNA deacylase.